A 275-amino-acid chain; its full sequence is 2,3,4,5-tetrahydropyridine-2,6-dicarboxylate N-succinyltransferase (275 aa).

The substrate site is built by arginine 104 and aspartate 141.

Belongs to the transferase hexapeptide repeat family. Homotrimer.

It is found in the cytoplasm. The enzyme catalyses (S)-2,3,4,5-tetrahydrodipicolinate + succinyl-CoA + H2O = (S)-2-succinylamino-6-oxoheptanedioate + CoA. The protein operates within amino-acid biosynthesis; L-lysine biosynthesis via DAP pathway; LL-2,6-diaminopimelate from (S)-tetrahydrodipicolinate (succinylase route): step 1/3. The protein is 2,3,4,5-tetrahydropyridine-2,6-dicarboxylate N-succinyltransferase of Actinobacillus succinogenes (strain ATCC 55618 / DSM 22257 / CCUG 43843 / 130Z).